Reading from the N-terminus, the 389-residue chain is Xylose isomerase (389 aa).

Active-site residues include histidine 101 and aspartate 104. Positions 232, 268, 271, 296, 307, and 309 each coordinate Mg(2+).

Belongs to the xylose isomerase family. In terms of assembly, homotetramer. It depends on Mg(2+) as a cofactor.

Its subcellular location is the cytoplasm. It catalyses the reaction alpha-D-xylose = alpha-D-xylulofuranose. This is Xylose isomerase from Lactococcus lactis subsp. cremoris (strain SK11).